The sequence spans 439 residues: Ribosomal protein uS12 methylthiotransferase RimO (439 aa).

The 113-residue stretch at 2–114 (SKLYLMSLGC…IDEMILKKTN (113 aa)) folds into the MTTase N-terminal domain. [4Fe-4S] cluster is bound by residues Cys11, Cys45, Cys77, Cys146, Cys150, and Cys153. Residues 132 to 363 (TGSNSHAFIK…VDEVIEKSFE (232 aa)) form the Radical SAM core domain.

It belongs to the methylthiotransferase family. RimO subfamily. [4Fe-4S] cluster serves as cofactor.

Its subcellular location is the cytoplasm. The enzyme catalyses L-aspartate(89)-[ribosomal protein uS12]-hydrogen + (sulfur carrier)-SH + AH2 + 2 S-adenosyl-L-methionine = 3-methylsulfanyl-L-aspartate(89)-[ribosomal protein uS12]-hydrogen + (sulfur carrier)-H + 5'-deoxyadenosine + L-methionine + A + S-adenosyl-L-homocysteine + 2 H(+). Functionally, catalyzes the methylthiolation of an aspartic acid residue of ribosomal protein uS12. This is Ribosomal protein uS12 methylthiotransferase RimO from Campylobacter jejuni subsp. jejuni serotype O:23/36 (strain 81-176).